A 758-amino-acid polypeptide reads, in one-letter code: Ribosomal RNA processing protein 1 homolog B (758 aa).

Phosphoserine is present on S245. Positions 259 to 272 (AVSKKKTALGKNHS) are enriched in basic residues. The tract at residues 259-285 (AVSKKKTALGKNHSRKDGLSDERGRDD) is disordered. The span at 273-285 (RKDGLSDERGRDD) shows a compositional bias: basic and acidic residues. A phosphoserine mark is found at S350, S392, S394, and S395. Residues 381 to 598 (GSRVFCVEEE…KTASLKKRKK (218 aa)) are disordered. Positions 397 to 408 (QKRRRKKKKKHH) are enriched in basic residues. Residues 447–457 (GAEATSSTGEE) show a composition bias toward low complexity. A phosphoserine mark is found at S452 and S458. The span at 469-481 (HNKRKRPRKKSPR) shows a compositional bias: basic residues. Residues 498–513 (SQSGPSGSHPQGPRGS) show a composition bias toward low complexity. S513 is modified (phosphoserine). Over residues 566–575 (QRRRLQKKKA) the composition is skewed to basic residues. S579 is modified (phosphoserine). K652 bears the N6-acetyllysine mark. The disordered stretch occupies residues 660-681 (KSSTATHPPGPAVQLNKTPSSS). A phosphoserine mark is found at S702 and S706. Residues 707–758 (PTGPSRVAFDPEQKPLHGVLKTPTSSPASSPLVAKKPLTTTPRRRPRAMDFF) are disordered. R712 is modified (citrulline). Position 728 is a phosphothreonine (T728). A phosphoserine mark is found at S732, S735, and S736.

It belongs to the RRP1 family. As to quaternary structure, interacts with the transcriptional activator E2F1. Interacts with serine/threonine-protein phosphatase PP1 subunits PPP1CB and PPP1CC but not with PPP1CA. Interacts with 60S ribosomal proteins RPL5 and RPL27, ribosomal processing protein RRP1/NNP1 and other nucleolar proteins including NOP2/NOL1 and FBL. Also interacts with nucleolar protein NPM1/B23. Interacts with splicing factor SRSF1 and with LUC7L3/CROP. Interacts with GTPase activator SIPA1. Interacts with CBX5/HP1alpha, H1-10, NCL, PARP1, TRIM28 and YBX3. In terms of assembly, (Microbial infection) Interacts with influenza A virus nucleoprotein NP and with RNA-directed RNA polymerase subunits PB1 and PB2. Post-translationally, citrullinated by PADI4.

It localises to the nucleus. The protein localises to the nucleolus. The protein resides in the nucleoplasm. It is found in the chromosome. Its function is as follows. Positively regulates DNA damage-induced apoptosis by acting as a transcriptional coactivator of proapoptotic target genes of the transcriptional activator E2F1. Likely to play a role in ribosome biogenesis by targeting serine/threonine protein phosphatase PP1 to the nucleolus. Involved in regulation of mRNA splicing. Inhibits SIPA1 GTPase activity. Involved in regulating expression of extracellular matrix genes. Associates with chromatin and may play a role in modulating chromatin structure. Functionally, (Microbial infection) Following influenza A virus (IAV) infection, promotes viral mRNA transcription by facilitating the binding of IAV RNA-directed RNA polymerase to capped mRNA. In Homo sapiens (Human), this protein is Ribosomal RNA processing protein 1 homolog B (RRP1B).